A 142-amino-acid chain; its full sequence is Coactosin-like protein (142 aa).

Residue Ala-2 is modified to N-acetylalanine. In terms of domain architecture, ADF-H spans 2 to 130 (ATKIDKEACR…EEDFIRSELK (129 aa)). Positions 66 to 75 (TGDAMSKRSK) are flexible and important for F-actin binding. Position 102 is an N6-acetyllysine (Lys-102). Phosphoserine is present on Ser-141.

This sequence belongs to the actin-binding proteins ADF family. Coactosin subfamily. As to quaternary structure, interacts with 5-lipoxygenase (ALOX5/5LO) in a calcium-independent manner. Binds to F-actin with a stoichiometry of 1:2.

The protein localises to the cytoplasm. It is found in the cytoskeleton. It localises to the nucleus. Binds to F-actin in a calcium-independent manner. Has no direct effect on actin depolymerization. Acts as a chaperone for ALOX5 (5LO), influencing both its stability and activity in leukotrienes synthesis. This chain is Coactosin-like protein (Cotl1), found in Mus musculus (Mouse).